Reading from the N-terminus, the 144-residue chain is MLLPKRVKYRREHRGKMRGRAKGGTEVHFGEYGIQALEASWITNRQIEAARIAMTRYMKRGGKVWIKIFPSKPYTAKPLEVRMGSGKGAPEGWVAVVKPGKVLFEISGVSEEVAREALRLASHKLPIKTKFVKREEIGGESNES.

This sequence belongs to the universal ribosomal protein uL16 family. As to quaternary structure, part of the 50S ribosomal subunit.

Binds 23S rRNA and is also seen to make contacts with the A and possibly P site tRNAs. This Bacillus pumilus (strain SAFR-032) protein is Large ribosomal subunit protein uL16.